The primary structure comprises 437 residues: Proton/glutamate-aspartate symporter (437 aa).

Over 1–5 (MKNIK) the chain is Cytoplasmic. A helical transmembrane segment spans residues 6–26 (FSLAWQILFAMVLGILLGSYL). At 27 to 50 (HYHSDSRDWLVVNLLSPAGDIFIH) the chain is on the periplasmic side. Residues 51–71 (LIKMIVVPIVISTLVVGIAGV) form a helical membrane-spanning segment. At 72 to 84 (GDAKQLGRIGAKT) the chain is on the cytoplasmic side. Residues 85–105 (IIYFEVITTVAIILGITLANV) form a helical membrane-spanning segment. Residues 106-159 (FQPGAGVDMSQLATVDISKYQSTTEAVQSSSHGIMGTILSLVPTNIVASMAKGE) lie on the Periplasmic side of the membrane. A helical transmembrane segment spans residues 160–180 (MLPIIFFSVLFGLGLSSLPAT). At 181 to 210 (HREPLVTVFRSISETMFKVTHMVMRYAPVG) the chain is on the cytoplasmic side. A helical transmembrane segment spans residues 211–231 (VFALIAVTVANFGFSSLWPLA). Residue K232 is a topological domain, periplasmic. A helical membrane pass occupies residues 233 to 253 (LVLLVHFAILFFALVVLGIVA). Residues 254-292 (RLCGLSVWILIRILKDELILAYSTASSESVLPRIIEKME) are Cytoplasmic-facing. Residues 293–313 (AYGAPVSITSFVVPTGYSFNL) form a helical membrane-spanning segment. The Periplasmic portion of the chain corresponds to 314 to 324 (DGSTLYQSIAA). The helical transmembrane segment at 325-345 (IFIAQLYGIDLSIWQEIILVL) threads the bilayer. At 346 to 361 (TLMVTSKGIAGVPGVS) the chain is on the cytoplasmic side. Residues 362-382 (FVVLLATLGSVGIPLEGLAFI) form a helical membrane-spanning segment. Residues 383-387 (AGVDR) lie on the Periplasmic side of the membrane. A helical transmembrane segment spans residues 388–408 (ILDMARTALNVVGNALAVLVI). Residues 409–437 (AKWEHKFDRKKALAYEREVLGKFDKTADQ) lie on the Cytoplasmic side of the membrane.

Belongs to the dicarboxylate/amino acid:cation symporter (DAACS) (TC 2.A.23) family. GltP subfamily.

It localises to the cell inner membrane. With respect to regulation, glutamate uptake is inhibited by L-cysteate and beta-hydroxyaspartate. Inhibited by the uncoupler carbonylcyanide m-chlorophenylhydrazone (CCCP). Its function is as follows. Catalyzes the proton-dependent, binding-protein-independent transport of glutamate and aspartate. The polypeptide is Proton/glutamate-aspartate symporter (Escherichia coli (strain K12)).